Here is a 347-residue protein sequence, read N- to C-terminus: Spermatogenesis associated 6-like protein (347 aa).

Residues 115-199 (SKSHGQRVQA…ENNLEHCSKK (85 aa)) form a disordered region. A compositionally biased stretch (polar residues) spans 116–125 (KSHGQRVQAT). The span at 153-166 (LHLHRPTQRNHGKS) shows a compositional bias: basic residues. Over residues 170–183 (PGERKPPFVVRHVD) the composition is skewed to basic and acidic residues. Phosphoserine is present on residues serine 218 and serine 221. The interval 234–285 (ERIVLKSQPPPPVDSSESRKPSLSHQGDASLHTETSVTTSQLSRPPSPLNQP) is disordered. The span at 254–277 (PSLSHQGDASLHTETSVTTSQLSR) shows a compositional bias: polar residues.

The protein belongs to the SPATA6 family.

The sequence is that of Spermatogenesis associated 6-like protein (Spata6l) from Mus musculus (Mouse).